The chain runs to 483 residues: Cysteine--tRNA ligase (483 aa).

Residue Cys29 participates in Zn(2+) binding. A 'HIGH' region motif is present at residues 31 to 41 (PTVYGHAHLGH). Cys221, His246, and Glu250 together coordinate Zn(2+). The short motif at 278–282 (KMGKS) is the 'KMSKS' region element. Residue Lys281 participates in ATP binding.

Belongs to the class-I aminoacyl-tRNA synthetase family. As to quaternary structure, monomer. Zn(2+) is required as a cofactor.

The protein localises to the cytoplasm. The enzyme catalyses tRNA(Cys) + L-cysteine + ATP = L-cysteinyl-tRNA(Cys) + AMP + diphosphate. This Chlorobium luteolum (strain DSM 273 / BCRC 81028 / 2530) (Pelodictyon luteolum) protein is Cysteine--tRNA ligase.